Reading from the N-terminus, the 369-residue chain is Flagellar P-ring protein (369 aa).

Positions 1 to 23 (MRIASFFTVLLTLLTLNIAPASA) are cleaved as a signal peptide.

It belongs to the FlgI family. The basal body constitutes a major portion of the flagellar organelle and consists of four rings (L,P,S, and M) mounted on a central rod.

It localises to the periplasm. Its subcellular location is the bacterial flagellum basal body. Its function is as follows. Assembles around the rod to form the L-ring and probably protects the motor/basal body from shearing forces during rotation. The chain is Flagellar P-ring protein from Pectobacterium carotovorum subsp. carotovorum (strain PC1).